Here is a 263-residue protein sequence, read N- to C-terminus: Bradykinin-potentiating and C-type natriuretic peptides (263 aa).

A signal peptide spans 1-23 (MFVSRLAASGLLLLALMALSLDG). Positions 24 to 30 (KPVQQWS) are excised as a propeptide. Q31 bears the Pyrrolidone carboxylic acid mark. Residues 42 to 48 (LVVQQWS) constitute a propeptide that is removed on maturation. Q49 carries the post-translational modification Pyrrolidone carboxylic acid. Residues 60 to 66 (LVVQQWS) constitute a propeptide that is removed on maturation. The residue at position 67 (Q67) is a Pyrrolidone carboxylic acid. The propeptide occupies 78–84 (LVVQQWS). The residue at position 85 (Q85) is a Pyrrolidone carboxylic acid. The interval 89-95 (PRPKIPP) is angiotensin-converting enzyme active site binding. The propeptide occupies 96–102 (LVVQQWS). At Q103 the chain carries Pyrrolidone carboxylic acid. Positions 107–113 (PRPKIPP) are angiotensin-converting enzyme active site binding. The propeptide occupies 114–116 (LVV). Pyrrolidone carboxylic acid is present on Q117. A propeptide spanning residues 128–130 (LLL) is cleaved from the precursor. Residue Q131 is modified to Pyrrolidone carboxylic acid. The propeptide occupies 137 to 241 (AGGTTALREE…ARRLKGLVKK (105 aa)). 2 disordered regions span residues 152–171 (EAAS…GSKA) and 177–205 (RLSK…GKQA). Residues 181–192 (SKGASATSASAS) show a composition bias toward low complexity. Residues 194–204 (PMRDLRTDGKQ) show a composition bias toward basic and acidic residues. C247 and C263 are disulfide-bonded.

In the N-terminal section; belongs to the bradykinin-potentiating peptide family. It in the C-terminal section; belongs to the natriuretic peptide family. In terms of tissue distribution, expressed by the venom gland.

It is found in the secreted. Its function is as follows. Inhibits the rabbit lung angiotensin-converting enzyme (ACE) (IC(50)=15 uM). Contracts the rat gastric fundus smooth muscle in a rapid and transient manner. Functionally, causes no contraction of the rat gastric fundus smooth muscle even at high concentrations. Causes very weak contraction of the isolated guinea pig ileum. Causes weak contraction on rat uterus. Inhibits the activity of the angiotensin-converting enzyme (ACE) by a preferential interaction with its C-domain (Ki=30 nM, IC(50)=1.1 uM). It binds ACE in a zinc-independent manner. Also potentiates the hypotensive effects of bradykinin. Causes high contraction of the isolated guinea pig ileum and weak contraction on rat uterus. In terms of biological role, inhibits the activity of the angiotensin-converting enzyme (ACE) by interacting with the same potency to its C- and N-domains. Inhibits the rabbit lung angiotensin-converting enzyme (ACE) (IC(50)=7.1 uM). Causes weak contraction of the isolated guinea pig ileum. Causes weak contraction on rat uterus. Its function is as follows. Inhibits the rabbit lung angiotensin-converting enzyme (ACE) (IC(50)=46 uM). Synthetic Leu3-blomhotin contracts the rat gastric fundus smooth muscle in a rapid and transient manner. Causes moderate contraction of the isolated guinea pig ileum. Causes weak contraction on rat uterus. Functionally, causes weak contraction of the isolated guinea pig ileum. Causes about 50-fold more potentiating activity on rat uterus than on guinea pig ileum. Synthetic peptide potentiates the bradykinin in vivo. In terms of biological role, synthetic peptide does not show any bradykinin-potentiating effects. Its function is as follows. has a vasorelaxant activity in rat aortic strips and a diuretic potency in anesthetized rats. May act by activating natriuretic receptors (NPR1 and/or NPR2). This is Bradykinin-potentiating and C-type natriuretic peptides from Gloydius blomhoffii (Mamushi).